Consider the following 291-residue polypeptide: tRNA-cytidine(32) 2-sulfurtransferase (291 aa).

Positions 36–41 (SGGKDS) match the PP-loop motif motif. The [4Fe-4S] cluster site is built by C111, C114, and C202. A disordered region spans residues 258–291 (RDPWLDAEDEEAEDCGEPPAGDGVVSLGGARGGR). Positions 262–273 (LDAEDEEAEDCG) are enriched in acidic residues.

This sequence belongs to the TtcA family. In terms of assembly, homodimer. It depends on Mg(2+) as a cofactor. Requires [4Fe-4S] cluster as cofactor.

It is found in the cytoplasm. It carries out the reaction cytidine(32) in tRNA + S-sulfanyl-L-cysteinyl-[cysteine desulfurase] + AH2 + ATP = 2-thiocytidine(32) in tRNA + L-cysteinyl-[cysteine desulfurase] + A + AMP + diphosphate + H(+). The protein operates within tRNA modification. Its function is as follows. Catalyzes the ATP-dependent 2-thiolation of cytidine in position 32 of tRNA, to form 2-thiocytidine (s(2)C32). The sulfur atoms are provided by the cysteine/cysteine desulfurase (IscS) system. In Anaeromyxobacter dehalogenans (strain 2CP-1 / ATCC BAA-258), this protein is tRNA-cytidine(32) 2-sulfurtransferase.